The sequence spans 308 residues: Uricase-2 isozyme 1 (308 aa).

Catalysis depends on charge relay system residues Lys-17 and Thr-63. Urate-binding residues include Thr-63, Asp-64, Phe-165, Arg-182, Val-237, Gln-238, and Asn-264. Catalysis depends on His-266, which acts as the Charge relay system. Residues 306–308 (SKL) carry the Microbody targeting signal motif.

This sequence belongs to the uricase family.

It is found in the peroxisome. The enzyme catalyses urate + O2 + H2O = 5-hydroxyisourate + H2O2. Its pathway is purine metabolism; urate degradation; (S)-allantoin from urate: step 1/3. Catalyzes the oxidation of uric acid to 5-hydroxyisourate, which is further processed to form (S)-allantoin. This Canavalia lineata (Beach bean) protein is Uricase-2 isozyme 1.